Reading from the N-terminus, the 376-residue chain is 1-deoxy-D-xylulose 5-phosphate reductoisomerase (376 aa).

NADPH contacts are provided by T12, G13, S14, I15, R39, Q40, and N110. K111 contributes to the 1-deoxy-D-xylulose 5-phosphate binding site. E112 contributes to the NADPH binding site. D136 is a Mn(2+) binding site. Positions 137, 138, 162, and 185 each coordinate 1-deoxy-D-xylulose 5-phosphate. Residue E138 coordinates Mn(2+). G191 contacts NADPH. S198, N203, K204, and E207 together coordinate 1-deoxy-D-xylulose 5-phosphate. Mn(2+) is bound at residue E207.

The protein belongs to the DXR family. Requires Mg(2+) as cofactor. It depends on Mn(2+) as a cofactor.

The catalysed reaction is 2-C-methyl-D-erythritol 4-phosphate + NADP(+) = 1-deoxy-D-xylulose 5-phosphate + NADPH + H(+). It participates in isoprenoid biosynthesis; isopentenyl diphosphate biosynthesis via DXP pathway; isopentenyl diphosphate from 1-deoxy-D-xylulose 5-phosphate: step 1/6. In terms of biological role, catalyzes the NADPH-dependent rearrangement and reduction of 1-deoxy-D-xylulose-5-phosphate (DXP) to 2-C-methyl-D-erythritol 4-phosphate (MEP). In Treponema pallidum (strain Nichols), this protein is 1-deoxy-D-xylulose 5-phosphate reductoisomerase.